Reading from the N-terminus, the 310-residue chain is Acetylglutamate kinase (310 aa).

Substrate-binding positions include 74 to 75, Arg-96, and Asn-201; that span reads GG.

This sequence belongs to the acetylglutamate kinase family. ArgB subfamily.

Its subcellular location is the cytoplasm. It catalyses the reaction N-acetyl-L-glutamate + ATP = N-acetyl-L-glutamyl 5-phosphate + ADP. It functions in the pathway amino-acid biosynthesis; L-arginine biosynthesis; N(2)-acetyl-L-ornithine from L-glutamate: step 2/4. Functionally, catalyzes the ATP-dependent phosphorylation of N-acetyl-L-glutamate. The protein is Acetylglutamate kinase of Arthrobacter sp. (strain FB24).